A 404-amino-acid polypeptide reads, in one-letter code: Probable tRNA sulfurtransferase (404 aa).

One can recognise a THUMP domain in the interval 60–165; that stretch reads QPVVEALKLV…DEAAYISYEE (106 aa). Residues 183 to 184, 208 to 209, Arg-265, Gly-287, and Gln-296 contribute to the ATP site; these read ML and HF.

The protein belongs to the ThiI family.

It is found in the cytoplasm. The catalysed reaction is [ThiI sulfur-carrier protein]-S-sulfanyl-L-cysteine + a uridine in tRNA + 2 reduced [2Fe-2S]-[ferredoxin] + ATP + H(+) = [ThiI sulfur-carrier protein]-L-cysteine + a 4-thiouridine in tRNA + 2 oxidized [2Fe-2S]-[ferredoxin] + AMP + diphosphate. It catalyses the reaction [ThiS sulfur-carrier protein]-C-terminal Gly-Gly-AMP + S-sulfanyl-L-cysteinyl-[cysteine desulfurase] + AH2 = [ThiS sulfur-carrier protein]-C-terminal-Gly-aminoethanethioate + L-cysteinyl-[cysteine desulfurase] + A + AMP + 2 H(+). It functions in the pathway cofactor biosynthesis; thiamine diphosphate biosynthesis. Its function is as follows. Catalyzes the ATP-dependent transfer of a sulfur to tRNA to produce 4-thiouridine in position 8 of tRNAs, which functions as a near-UV photosensor. Also catalyzes the transfer of sulfur to the sulfur carrier protein ThiS, forming ThiS-thiocarboxylate. This is a step in the synthesis of thiazole, in the thiamine biosynthesis pathway. The sulfur is donated as persulfide by IscS. This is Probable tRNA sulfurtransferase from Streptococcus pyogenes serotype M5 (strain Manfredo).